The primary structure comprises 875 residues: MDPAKATPMFAQYLQIKEQYPDCILFYRLGDFYETFMDDAELVARELELVLTGRDAGKDMGRVPMAGIPYHAAEAYIARLIEKGYKVAICDQLEDPKKAKGLVKRDVTRVVTPGTLVEPRLLPEKANNFLAAIAWSRTGFGLAVVDLSTGEFAAAQMNGADSLRLLLEEIGRLEPREVILEPGLAAEPSVTGPLKASGIAVSVFEGRHFNHANAYRKLTEHFGTANLSGFGCEDLELATSAAGAALAYLEEMHKASLGHVSGLAVYYPGDYMVLDPATRRNLELTRSLRDGGRRGTLLWVMDRTVTAMGARLLKSWLERPLLDLRQIHARHEAVGELVHRPVLRADLRALLQEVHDLERLAGRVAVGSANARDLVALKQSLVALPSIRVALEDVRAERLVELRDQLDMLDDVRDLIEHAIADEPPVALTEGGILKDGFHPEVDELRRIARDGKAWIAQVEARERERTGIKSLKIGYNKVFGYYLAVTKPNLPLVPPDYIRKQTLANEERFITPELKELEEKVLHAAERVMDLEYELFVEIRQRVAAEVTRIQRSARAVAELDALASFAEVASLYGYCRPLVDGSTVLELKGSRHPVLERVMEEGAFVPNDLLVDTGENRVLLITGPNMGGKSTVMRQAALAVILAQAGSFVPAESAHIGLVDRVFTRVGASDDLATGRSTFMVEMTEVANILHSATERSLVVLDEVGRGTATFDGLSIAWAITEHIHQAIGCRTLFATHYHELCELEGILPGVKNYSVAVMEKGEDIIFLRKLVRGGADRSYGIQVGRLAGLPASVVERAREILATLEEQEGERKSRREAAAQRLRRQPAVQLTFFEPKKDPVVEELLGLNVMALTPIEALNTLYQLQAKAKENR.

625–632 (GPNMGGKS) provides a ligand contact to ATP.

Belongs to the DNA mismatch repair MutS family.

In terms of biological role, this protein is involved in the repair of mismatches in DNA. It is possible that it carries out the mismatch recognition step. This protein has a weak ATPase activity. The polypeptide is DNA mismatch repair protein MutS (Symbiobacterium thermophilum (strain DSM 24528 / JCM 14929 / IAM 14863 / T)).